Consider the following 272-residue polypeptide: Serine/arginine-rich splicing factor 5 (272 aa).

The RRM 1 domain maps to 4–74 (CRVFIGRLNP…ERVTIEHARA (71 aa)). The segment at 73-105 (RARSRGGRGRGRYSDRFSSRRPRNDRRNAPPVR) is disordered. Over residues 74–83 (ARSRGGRGRG) the composition is skewed to basic residues. Position 86 is a phosphoserine (Ser-86). The RRM 2 domain maps to 108 to 181 (NRLIVENLSS…RKIKLIEGSK (74 aa)). Lys-167 is modified (N6-acetyllysine). A disordered region spans residues 174–272 (IKLIEGSKRH…SRSRSVDSGN (99 aa)). Over residues 182-229 (RHSRSRSRSRSRTRSSSRSRSRSRSRSRKSYSRSRSRSRSRSRSKSRS) the composition is skewed to basic residues. Ser-227, Ser-229, Ser-233, Ser-250, and Ser-253 each carry phosphoserine. Over residues 242 to 254 (RGSSSRSKSPASV) the composition is skewed to low complexity.

This sequence belongs to the splicing factor SR family. In terms of assembly, interacts (via RS domain) with PHF5A (via N-terminus). Found in a pre-mRNA splicing complex with SRSF4/SFRS4, SRSF5/SFRS5, SNRNP70, SNRPA1, SRRM1 and SRRM2. Extensively phosphorylated on serine residues in the RS domain.

It localises to the nucleus. Functionally, plays a role in constitutive splicing and can modulate the selection of alternative splice sites. This chain is Serine/arginine-rich splicing factor 5 (SRSF5), found in Homo sapiens (Human).